Here is a 188-residue protein sequence, read N- to C-terminus: Capsid protein (188 aa).

Belongs to the tymoviruses capsid protein family.

The protein resides in the virion. In terms of biological role, self-assembles to form a T=3 icosahedral capsid composed of 180 copies of the capsid protein. The capsid encapsulates the single-stranded RNA genome. The chain is Capsid protein from Solanum lycopersicum (Tomato).